We begin with the raw amino-acid sequence, 156 residues long: NADH-ubiquinone oxidoreductase 20 kDa subunit (156 aa).

[4Fe-4S] cluster-binding residues include cysteine 33, cysteine 34, cysteine 98, and cysteine 128.

The protein belongs to the complex I 20 kDa subunit family. The cofactor is [4Fe-4S] cluster.

It localises to the mitochondrion. It carries out the reaction a ubiquinone + NADH + 5 H(+)(in) = a ubiquinol + NAD(+) + 4 H(+)(out). This Paramecium tetraurelia protein is NADH-ubiquinone oxidoreductase 20 kDa subunit (NAD10).